Consider the following 466-residue polypeptide: Adenosylhomocysteinase (466 aa).

Residues threonine 57, aspartate 132, and glutamate 192 each coordinate substrate. 193–195 (TTT) is an NAD(+) binding site. Substrate contacts are provided by lysine 222 and aspartate 226. Residues asparagine 227, 256–261 (GYGDVG), glutamate 279, asparagine 314, 335–337 (IGH), and asparagine 380 each bind NAD(+).

It belongs to the adenosylhomocysteinase family. NAD(+) is required as a cofactor.

The protein localises to the cytoplasm. The enzyme catalyses S-adenosyl-L-homocysteine + H2O = L-homocysteine + adenosine. Its pathway is amino-acid biosynthesis; L-homocysteine biosynthesis; L-homocysteine from S-adenosyl-L-homocysteine: step 1/1. May play a key role in the regulation of the intracellular concentration of adenosylhomocysteine. The protein is Adenosylhomocysteinase of Rhizobium rhizogenes (strain K84 / ATCC BAA-868) (Agrobacterium radiobacter).